We begin with the raw amino-acid sequence, 215 residues long: Recombination protein RecR (215 aa).

A C4-type zinc finger spans residues 74–89 (CQRCGHLSADPICDIC). Residues 97-191 (GVICVVADSR…RVTRIAYGLP (95 aa)) enclose the Toprim domain.

The protein belongs to the RecR family.

May play a role in DNA repair. It seems to be involved in an RecBC-independent recombinational process of DNA repair. It may act with RecF and RecO. The sequence is that of Recombination protein RecR from Synechococcus sp. (strain RCC307).